Here is a 91-residue protein sequence, read N- to C-terminus: Large ribosomal subunit protein eL37B (91 aa).

The Zn(2+) site is built by Cys19, Cys22, Cys34, and Cys37. The C4-type zinc-finger motif lies at 19–37; it reads CRRCGKRSFHIQKSTCACC.

Belongs to the eukaryotic ribosomal protein eL37 family. As to quaternary structure, component of the large ribosomal subunit (LSU). Mature yeast ribosomes consist of a small (40S) and a large (60S) subunit. The 40S small subunit contains 1 molecule of ribosomal RNA (18S rRNA) and at least 33 different proteins. The large 60S subunit contains 3 rRNA molecules (25S, 5.8S and 5S rRNA) and at least 46 different proteins. Zn(2+) is required as a cofactor.

The protein localises to the cytoplasm. Functionally, component of the ribosome, a large ribonucleoprotein complex responsible for the synthesis of proteins in the cell. The small ribosomal subunit (SSU) binds messenger RNAs (mRNAs) and translates the encoded message by selecting cognate aminoacyl-transfer RNA (tRNA) molecules. The large subunit (LSU) contains the ribosomal catalytic site termed the peptidyl transferase center (PTC), which catalyzes the formation of peptide bonds, thereby polymerizing the amino acids delivered by tRNAs into a polypeptide chain. The nascent polypeptides leave the ribosome through a tunnel in the LSU and interact with protein factors that function in enzymatic processing, targeting, and the membrane insertion of nascent chains at the exit of the ribosomal tunnel. This chain is Large ribosomal subunit protein eL37B (rpl3702), found in Schizosaccharomyces pombe (strain 972 / ATCC 24843) (Fission yeast).